A 362-amino-acid polypeptide reads, in one-letter code: N5-carboxyaminoimidazole ribonucleotide synthase (362 aa).

Residues Arg85, Lys125, 130–136 (GYDGRGQ), 158–161 (EKFI), Glu166, and 244–245 (NE) contribute to the ATP site. The ATP-grasp domain occupies 89–274 (KSLLDELNLS…QFELHLRALL (186 aa)).

It belongs to the PurK/PurT family. Homodimer.

It catalyses the reaction 5-amino-1-(5-phospho-beta-D-ribosyl)imidazole + hydrogencarbonate + ATP = 5-carboxyamino-1-(5-phospho-D-ribosyl)imidazole + ADP + phosphate + 2 H(+). The protein operates within purine metabolism; IMP biosynthesis via de novo pathway; 5-amino-1-(5-phospho-D-ribosyl)imidazole-4-carboxylate from 5-amino-1-(5-phospho-D-ribosyl)imidazole (N5-CAIR route): step 1/2. Its function is as follows. Catalyzes the ATP-dependent conversion of 5-aminoimidazole ribonucleotide (AIR) and HCO(3)(-) to N5-carboxyaminoimidazole ribonucleotide (N5-CAIR). The polypeptide is N5-carboxyaminoimidazole ribonucleotide synthase (Haemophilus influenzae (strain ATCC 51907 / DSM 11121 / KW20 / Rd)).